Here is a 399-residue protein sequence, read N- to C-terminus: Dual-specificity RNA methyltransferase RlmN (399 aa).

Catalysis depends on E122, which acts as the Proton acceptor. A Radical SAM core domain is found at 128-371 (ETDRGTLCVS…VRTPRGRDIL (244 aa)). Residues C135 and C374 are joined by a disulfide bond. [4Fe-4S] cluster is bound by residues C142, C146, and C149. Residues 200-201 (GE), S232, 254-256 (SLH), and N331 each bind S-adenosyl-L-methionine. The active-site S-methylcysteine intermediate is C374.

This sequence belongs to the radical SAM superfamily. RlmN family. [4Fe-4S] cluster serves as cofactor.

The protein resides in the cytoplasm. The catalysed reaction is adenosine(2503) in 23S rRNA + 2 reduced [2Fe-2S]-[ferredoxin] + 2 S-adenosyl-L-methionine = 2-methyladenosine(2503) in 23S rRNA + 5'-deoxyadenosine + L-methionine + 2 oxidized [2Fe-2S]-[ferredoxin] + S-adenosyl-L-homocysteine. It catalyses the reaction adenosine(37) in tRNA + 2 reduced [2Fe-2S]-[ferredoxin] + 2 S-adenosyl-L-methionine = 2-methyladenosine(37) in tRNA + 5'-deoxyadenosine + L-methionine + 2 oxidized [2Fe-2S]-[ferredoxin] + S-adenosyl-L-homocysteine. In terms of biological role, specifically methylates position 2 of adenine 2503 in 23S rRNA and position 2 of adenine 37 in tRNAs. m2A2503 modification seems to play a crucial role in the proofreading step occurring at the peptidyl transferase center and thus would serve to optimize ribosomal fidelity. In Rhodopseudomonas palustris (strain HaA2), this protein is Dual-specificity RNA methyltransferase RlmN.